A 390-amino-acid polypeptide reads, in one-letter code: S-adenosylmethionine synthase 2 (390 aa).

Glutamate 9 provides a ligand contact to Mg(2+). Histidine 15 lines the ATP pocket. Residue glutamate 43 coordinates K(+). L-methionine-binding residues include glutamate 56 and glutamine 99. ATP is bound by residues 167–169 (DGK), 235–238 (SGRF), aspartate 246, 252–253 (RK), alanine 269, lysine 273, and lysine 277. Aspartate 246 serves as a coordination point for L-methionine. Residue lysine 277 coordinates L-methionine.

It belongs to the AdoMet synthase family. Homotetramer. Requires Mn(2+) as cofactor. It depends on Mg(2+) as a cofactor. Co(2+) is required as a cofactor. K(+) serves as cofactor.

The protein localises to the cytoplasm. It carries out the reaction L-methionine + ATP + H2O = S-adenosyl-L-methionine + phosphate + diphosphate. The protein operates within amino-acid biosynthesis; S-adenosyl-L-methionine biosynthesis; S-adenosyl-L-methionine from L-methionine: step 1/1. In terms of biological role, catalyzes the formation of S-adenosylmethionine from methionine and ATP. The reaction comprises two steps that are both catalyzed by the same enzyme: formation of S-adenosylmethionine (AdoMet) and triphosphate, and subsequent hydrolysis of the triphosphate. The protein is S-adenosylmethionine synthase 2 (METK2) of Solanum tuberosum (Potato).